Here is a 469-residue protein sequence, read N- to C-terminus: MFLPRPDFRIALFICFMAVSFVISRFGSEVRPTLLLALPLVLGHVSTGLIGFVLNVIAGHHSTVTLAASTIGTALLWLPMLVPMGTLISLTVLVSQLHGAERERDIGPLFRQALWLAMLLGLVMFTFLSVVPALLPLFGIVPDIVPGAAKFLHVVRWGSLAFPLYFCMRYFCEGMHCTFPTMLLGFGGLLVLVPLSYALTYGRFGFSEYGVEGLGIATVMVMWLQAVVFALYLWRSRRFAHLQLFAHLELPCWARIRDLLNIGLPIGISILMEGGLFIVTTLLIGRFGTDEIAAHQIALSVAQLCFMIPMGVAEATTVRIGHAVGRCDLLVMRRVAWAGYAIVIGTQTLSASVLLLGYDVIVAAYTDDLVVASLASKLLLFAAIFQFPDGLQMLSSGVLRGMKDTRVPMLLAMISYWGLGMPLGLGLGFALEWNSRGMWIGLIIGLTAAAVLLGWRFRVVSERMFAGIP.

Helical transmembrane passes span 10–30 (IALF…GSEV), 34–54 (LLLA…GFVL), 74–94 (ALLW…TVLV), 121–141 (GLVM…FGIV), 179–199 (FPTM…SYAL), 214–234 (LGIA…LYLW), 264–284 (LPIG…TLLI), 292–312 (IAAH…PMGV), 335–355 (VAWA…SVLL), 369–389 (LVVA…QFPD), 409–429 (MLLA…GLGF), and 437–457 (GMWI…GWRF).

It belongs to the multi antimicrobial extrusion (MATE) (TC 2.A.66.1) family.

It localises to the cell inner membrane. Its function is as follows. Multidrug efflux pump. This is Probable multidrug resistance protein NorM (norM) from Xylella fastidiosa (strain 9a5c).